Reading from the N-terminus, the 181-residue chain is UPF0302 protein ABC1905 (181 aa).

This sequence belongs to the UPF0302 family.

This chain is UPF0302 protein ABC1905, found in Shouchella clausii (strain KSM-K16) (Alkalihalobacillus clausii).